We begin with the raw amino-acid sequence, 344 residues long: Methionine import ATP-binding protein MetN (344 aa).

An ABC transporter domain is found at 2-241 (LELKQVGKVY…PQAEVTKAFV (240 aa)). 38 to 45 (GYSGAGKS) provides a ligand contact to ATP.

It belongs to the ABC transporter superfamily. Methionine importer (TC 3.A.1.24) family. In terms of assembly, the complex is composed of two ATP-binding proteins (MetN), two transmembrane proteins (MetI) and a solute-binding protein (MetQ).

It is found in the cell membrane. The catalysed reaction is L-methionine(out) + ATP + H2O = L-methionine(in) + ADP + phosphate + H(+). It catalyses the reaction D-methionine(out) + ATP + H2O = D-methionine(in) + ADP + phosphate + H(+). Functionally, part of the ABC transporter complex MetNIQ involved in methionine import. Responsible for energy coupling to the transport system. This Latilactobacillus sakei subsp. sakei (strain 23K) (Lactobacillus sakei subsp. sakei) protein is Methionine import ATP-binding protein MetN.